Here is an 832-residue protein sequence, read N- to C-terminus: MDESSLVRFVFLLCLVSSSVFCLAESDQNATVSSAVYIVTLKDRPSVHFSGRESSDSKHSLTATSSQIYRTLNRSASIIRVHDSLLRNVLRKENYLKLYSYHYLINGFSAVLTRKQADRLAAREEVENVVLDFLVEKATTHTPQFLGLPRGAWLRDGGSEYAGEGVVIGFIDTGIDPTHPSFSDKISGHTYSVPPHFTGVCEVTIGFPPGSCNRKLIGARHFAESALSRGVLNSSQDDASPFDGEGHGTHTASVAAGNHGIPVVVAGHRLGNASGMAPRAHIAIYKALYKRFGGFAADIIAAIDQAAQDGVDIINLSITPNRRPPGIATFFNPIDMALLSAVKAGIFVVQAAGNTGPAPKSMSSFSPWIFTVGATSHDRVYSNSIILGNNVTIPGVGLASGTRIMHKLVLATHALRNGTTVMDAIYVGECQDSSSFDQKLVQGKILVCSYTVRFILGVSTIKQALLTAKNLTAAGLVFYIDPSATGFQMTSSPMDIPGILISSPQDSQALLRYYNSSLLRENGSGKIVGSASVAKIVGGMRPTYGITAPKVMYFSARGPDPEDDSFVDADIMKPNLVAPGNAIWGAWSPLGIGTNDFQGERFAMESGTSMSAPHVTGIAALIKQKFPHFTPAAIASALSTTASLSDRKGEHIMAQRTVLNPDISQSPATPFDMGSGFVNATAALDPGLIFDIGYNEYMKFLCGINGSSPVVLNYTGESCSSYNSSLAASDLNLPSVTIAKLVGTRAVLRWVTNIATTATNETYIVGWMAPDSVSVKVSPAKFTIGNGQTRVLSLVFRAMKNVSMASFGRIGLFGDRGHVVNIPVAVIYKIAV.

Residues 1-24 (MDESSLVRFVFLLCLVSSSVFCLA) form the signal peptide. A propeptide spans 25–138 (ESDQNATVSS…VVLDFLVEKA (114 aa)) (activation peptide). N-linked (GlcNAc...) asparagine glycosylation is found at asparagine 29 and asparagine 73. Residues 36–136 (VYIVTLKDRP…ENVVLDFLVE (101 aa)) enclose the Inhibitor I9 domain. The Peptidase S8 domain occupies 145 to 684 (FLGLPRGAWL…SGFVNATAAL (540 aa)). Residue aspartate 172 is the Charge relay system of the active site. A glycan (N-linked (GlcNAc...) asparagine) is linked at asparagine 233. The Charge relay system role is filled by histidine 247. Asparagine 272, asparagine 315, asparagine 390, asparagine 417, asparagine 470, asparagine 515, and asparagine 522 each carry an N-linked (GlcNAc...) asparagine glycan. A PA domain is found at 408 to 503 (LVLATHALRN…MDIPGILISS (96 aa)). Catalysis depends on serine 609, which acts as the Charge relay system. N-linked (GlcNAc...) asparagine glycans are attached at residues asparagine 679, asparagine 705, asparagine 713, asparagine 723, asparagine 760, and asparagine 801.

Belongs to the peptidase S8 family.

It localises to the secreted. The protein is Subtilisin-like protease SBT2.1 of Arabidopsis thaliana (Mouse-ear cress).